A 353-amino-acid chain; its full sequence is tRNA-splicing endonuclease (353 aa).

Active-site residues include Tyr-289, His-300, and Lys-331.

This sequence belongs to the tRNA-intron endonuclease family. Archaeal long subfamily. In terms of assembly, homodimer.

It carries out the reaction pretRNA = a 3'-half-tRNA molecule with a 5'-OH end + a 5'-half-tRNA molecule with a 2',3'-cyclic phosphate end + an intron with a 2',3'-cyclic phosphate and a 5'-hydroxyl terminus.. In terms of biological role, endonuclease that removes tRNA introns. Cleaves pre-tRNA at the 5'- and 3'-splice sites to release the intron. The products are an intron and two tRNA half-molecules bearing 2',3' cyclic phosphate and 5'-OH termini. Recognizes a pseudosymmetric substrate in which 2 bulged loops of 3 bases are separated by a stem of 4 bp. The sequence is that of tRNA-splicing endonuclease from Methanosarcina mazei (strain ATCC BAA-159 / DSM 3647 / Goe1 / Go1 / JCM 11833 / OCM 88) (Methanosarcina frisia).